Reading from the N-terminus, the 1187-residue chain is DNA-directed RNA polymerase subunit beta (1187 aa).

Belongs to the RNA polymerase beta chain family. The RNAP catalytic core consists of 2 alpha, 1 beta, 1 beta' and 1 omega subunit. When a sigma factor is associated with the core the holoenzyme is formed, which can initiate transcription.

It carries out the reaction RNA(n) + a ribonucleoside 5'-triphosphate = RNA(n+1) + diphosphate. DNA-dependent RNA polymerase catalyzes the transcription of DNA into RNA using the four ribonucleoside triphosphates as substrates. This is DNA-directed RNA polymerase subunit beta from Petrotoga mobilis (strain DSM 10674 / SJ95).